The sequence spans 1164 residues: Hamartin (1164 aa).

A Glycyl lysine isopeptide (Lys-Gly) (interchain with G-Cter in ubiquitin) cross-link involves residue Lys30. The segment at Ser403–Glu787 is mediates interaction with WDR45B. The interval Leu439 to Glu571 is disordered. Residues Glu474–Ser487 are compositionally biased toward basic and acidic residues. 5 positions are modified to phosphoserine: Ser487, Ser505, Ser511, Ser521, and Ser598. Over residues Pro513–Ser530 the composition is skewed to polar residues. Residues Arg721–Asn997 adopt a coiled-coil conformation. The segment at Gly1006 to Lys1085 is disordered. Basic and acidic residues predominate over residues His1007–Thr1020. The span at Ser1073–Lys1085 shows a compositional bias: polar residues. Ser1100 bears the Phosphoserine mark. Positions Ile1131–Ser1164 are disordered. The segment covering Asp1155–Ser1164 has biased composition (basic and acidic residues).

As to quaternary structure, component of the TSC-TBC complex (also named Rhebulator complex), composed of 2 molecules of TSC1, 2 molecules of TSC2 and 1 molecule of TBC1D7. Probably forms a complex composed of chaperones HSP90 and HSP70, co-chaperones STIP1/HOP, CDC37, PPP5C, PTGES3/p23, TSC1 and client protein TSC2. Forms a complex composed of chaperones HSP90 and HSP70, co-chaperones CDC37, PPP5C, TSC1 and client protein TSC2, CDK4, AKT, RAF1 and NR3C1; this complex does not contain co-chaperones STIP1/HOP and PTGES3/p23. Forms a complex containing HSP90AA1, TSC1 and TSC2; TSC1 is required to recruit TCS2 to the complex. Interacts (via C-terminus) with the closed form of HSP90AA1 (via the middle domain and TPR repeat-binding motif). Interacts with DOCK7. Interacts with FBXW5. Interacts with WDR45B. Interacts with RPAP3 and URI1. In terms of processing, phosphorylation at Ser-505 does not affect interaction with TSC2. Post-translationally, 'Lys-63'-linked ubiquitinated at Lys-30 by PELI1; the ubiquitination promotes TSC1/TSC2 complex stability. As to expression, highly expressed in skeletal muscle, followed by heart, brain, placenta, pancreas, lung, liver and kidney. Also expressed in embryonic kidney cells.

The protein localises to the lysosome membrane. It localises to the cytoplasm. It is found in the cytosol. In terms of biological role, non-catalytic component of the TSC-TBC complex, a multiprotein complex that acts as a negative regulator of the canonical mTORC1 complex, an evolutionarily conserved central nutrient sensor that stimulates anabolic reactions and macromolecule biosynthesis to promote cellular biomass generation and growth. The TSC-TBC complex acts as a GTPase-activating protein (GAP) for the small GTPase RHEB, a direct activator of the protein kinase activity of mTORC1. In absence of nutrients, the TSC-TBC complex inhibits mTORC1, thereby preventing phosphorylation of ribosomal protein S6 kinase (RPS6KB1 and RPS6KB2) and EIF4EBP1 (4E-BP1) by the mTORC1 signaling. The TSC-TBC complex is inactivated in response to nutrients, relieving inhibition of mTORC1. Within the TSC-TBC complex, TSC1 stabilizes TSC2 and prevents TSC2 self-aggregation. Acts as a tumor suppressor. Involved in microtubule-mediated protein transport via its ability to regulate mTORC1 signaling. Also acts as a co-chaperone for HSP90AA1 facilitating HSP90AA1 chaperoning of protein clients such as kinases, TSC2 and glucocorticoid receptor NR3C1. Increases ATP binding to HSP90AA1 and inhibits HSP90AA1 ATPase activity. Competes with the activating co-chaperone AHSA1 for binding to HSP90AA1, thereby providing a reciprocal regulatory mechanism for chaperoning of client proteins. Recruits TSC2 to HSP90AA1 and stabilizes TSC2 by preventing the interaction between TSC2 and ubiquitin ligase HERC1. The chain is Hamartin from Homo sapiens (Human).